The sequence spans 264 residues: Nicotinamide N-methyltransferase (264 aa).

At arginine 18 the chain carries Citrulline; alternate. Tyrosine 20 and tyrosine 25 together coordinate S-adenosyl-L-methionine. An N6-acetyllysine modification is found at lysine 39. Residues glycine 63, tyrosine 69, aspartate 85, and asparagine 90 each coordinate S-adenosyl-L-methionine. Position 132 is a citrulline; alternate (arginine 132). S-adenosyl-L-methionine is bound by residues 142–143 and threonine 163; that span reads DV. The residue at position 181 (arginine 181) is a Citrulline; alternate. Residues aspartate 197 and serine 213 each coordinate nicotinamide.

Belongs to the class I-like SAM-binding methyltransferase superfamily. NNMT/PNMT/TEMT family. As to quaternary structure, monomer. Post-translationally, deiminated by PADI1 and PADI2. Predominantly expressed in the liver. A lower expression is seen in the kidney, lung, skeletal muscle, placenta and heart. Not detected in the brain or pancreas.

Its subcellular location is the cytoplasm. The catalysed reaction is nicotinamide + S-adenosyl-L-methionine = 1-methylnicotinamide + S-adenosyl-L-homocysteine. Its pathway is cofactor metabolism. It participates in amino-acid degradation. Inactivated by deimination on Arg-132. Functionally, catalyzes the N-methylation of nicotinamide using the universal methyl donor S-adenosyl-L-methionine to form N1-methylnicotinamide and S-adenosyl-L-homocysteine, a predominant nicotinamide/vitamin B3 clearance pathway. Plays a central role in regulating cellular methylation potential, by consuming S-adenosyl-L-methionine and limiting its availability for other methyltransferases. Actively mediates genome-wide epigenetic and transcriptional changes through hypomethylation of repressive chromatin marks, such as H3K27me3. In a developmental context, contributes to low levels of the repressive histone marks that characterize pluripotent embryonic stem cell pre-implantation state. Acts as a metabolic regulator primarily on white adipose tissue energy expenditure as well as hepatic gluconeogenesis and cholesterol biosynthesis. In white adipocytes, regulates polyamine flux by consuming S-adenosyl-L-methionine which provides for propylamine group in polyamine biosynthesis, whereas by consuming nicotinamide controls NAD(+) levels through the salvage pathway. Via its product N1-methylnicotinamide regulates protein acetylation in hepatocytes, by repressing the ubiquitination and increasing the stability of SIRT1 deacetylase. Can also N-methylate other pyridines structurally related to nicotinamide and play a role in xenobiotic detoxification. This Homo sapiens (Human) protein is Nicotinamide N-methyltransferase.